We begin with the raw amino-acid sequence, 468 residues long: 55 kDa erythrocyte membrane protein (468 aa).

Residues 73–154 (LVQFEKVTEE…MVSIKVIPNQ (82 aa)) enclose the PDZ domain. The 71-residue stretch at 160-230 (ALQMFMRAQF…PSPELQEWRV (71 aa)) folds into the SH3 domain. Residues 284-453 (RKTLVLIGAS…SLKLLEEAFE (170 aa)) form the Guanylate kinase-like domain.

It belongs to the MAGUK family.

The protein localises to the membrane. The protein resides in the cell projection. It is found in the stereocilium. May play a role in the regulation of neutrophil polarization. The chain is 55 kDa erythrocyte membrane protein (MPP1) from Gallus gallus (Chicken).